A 366-amino-acid polypeptide reads, in one-letter code: tRNA N6-adenosine threonylcarbamoyltransferase (366 aa).

3 residues coordinate a divalent metal cation: histidine 130, histidine 134, and tyrosine 151. Substrate-binding positions include 151-155, aspartate 183, glycine 198, glutamate 202, and asparagine 297; that span reads YVSGG. Aspartate 325 is an a divalent metal cation binding site.

It belongs to the KAE1 / TsaD family. In terms of assembly, component of the EKC/KEOPS complex composed of at least BUD32, CGI121, GON7, KAE1 and PCC1; the whole complex dimerizes. Requires a divalent metal cation as cofactor.

The protein resides in the cytoplasm. It is found in the nucleus. It catalyses the reaction L-threonylcarbamoyladenylate + adenosine(37) in tRNA = N(6)-L-threonylcarbamoyladenosine(37) in tRNA + AMP + H(+). Functionally, component of the EKC/KEOPS complex that is required for the formation of a threonylcarbamoyl group on adenosine at position 37 (t(6)A37) in tRNAs that read codons beginning with adenine. The complex is probably involved in the transfer of the threonylcarbamoyl moiety of threonylcarbamoyl-AMP (TC-AMP) to the N6 group of A37. KAE1 likely plays a direct catalytic role in this reaction, but requires other protein(s) of the complex to fulfill this activity. The EKC/KEOPS complex also promotes both telomere uncapping and telomere elongation. The complex is required for efficient recruitment of transcriptional coactivators. This is tRNA N6-adenosine threonylcarbamoyltransferase from Cryptococcus neoformans var. neoformans serotype D (strain JEC21 / ATCC MYA-565) (Filobasidiella neoformans).